The following is a 914-amino-acid chain: Probable UDP-N-acetylglucosamine--peptide N-acetylglucosaminyltransferase SPINDLY (914 aa).

The segment at 1–39 (MVGLEDDTERERSPVVENGFSNGSRSSSSSAGVLSPSRK) is disordered. The segment covering 19-37 (GFSNGSRSSSSSAGVLSPS) has biased composition (low complexity). Ser-35 carries the phosphoserine modification. TPR repeat units lie at residues 43 to 76 (GNDT…DSKN), 77 to 110 (VEAH…DPHN), 112 to 144 (CALT…DASY), 152 to 185 (AIVL…DPHY), 186 to 219 (APAY…RPMY), 220 to 253 (AEAY…SPNF), 261 to 294 (AIAL…NWHY), 295 to 328 (ADAM…NPHC), 329 to 362 (AEAC…KPNF), 364 to 396 (QSLN…NPTY), and 397 to 430 (AEAF…DPDS). Residues 431–914 (RNAGQNRLLA…QLSKRMDSTS (484 aa)) form a catalytic region region. The segment at 866 to 914 (PLISKDLGPSRVSVTGEATPSLKANGSAPVPSSLPTQSPQLSKRMDSTS) is disordered. Over residues 877-889 (VSVTGEATPSLKA) the composition is skewed to polar residues. Low complexity predominate over residues 894-907 (PVPSSLPTQSPQLS).

The protein belongs to the glycosyltransferase 41 family. O-GlcNAc transferase subfamily. Homomultimer; via its TPR repeats. Interacts with GI. Interacts with TCP14 and TCP15. Interacts (via N-terminus) with APRR5. Interacts with CPN20. Widely expressed. Present throughout the plant (at protein level).

It is found in the cytoplasm. It localises to the nucleus. The catalysed reaction is L-seryl-[protein] + UDP-N-acetyl-alpha-D-glucosamine = 3-O-(N-acetyl-beta-D-glucosaminyl)-L-seryl-[protein] + UDP + H(+). It carries out the reaction L-threonyl-[protein] + UDP-N-acetyl-alpha-D-glucosamine = 3-O-(N-acetyl-beta-D-glucosaminyl)-L-threonyl-[protein] + UDP + H(+). It catalyses the reaction L-seryl-[protein] + GDP-beta-L-fucose = 3-O-(alpha-L-fucosyl)-L-seryl-[protein] + GDP + H(+). The enzyme catalyses L-threonyl-[protein] + GDP-beta-L-fucose = 3-O-(alpha-L-fucosyl)-L-threonyl-[protein] + GDP + H(+). The protein operates within protein modification; protein glycosylation. Probable O-linked N-acetylglucosamine transferase (OGT) involved in various processes such as gibberellin (GA) signaling pathway and circadian clock. OGTs catalyze the addition of nucleotide-activated sugars directly onto the polypeptide through O-glycosidic linkage with the hydroxyl of serine or threonine. Probably acts by adding O-linked sugars to yet unknown proteins. Acts as a repressor of GA signaling pathway to inhibit hypocotyl elongation. Functions with GIGANTEA (GI) in pathways controlling flowering, circadian cotyledon movements and hypocotyl elongation. Acts as a light-regulated promoter of elongation via its interaction with GI. Acts as an activator of cytokinin signaling. Required with SEC for gamete and seed development. Its OGT activity has been proved in vitro but not in vivo. Possesses O-fucosyltransferase activity on specific serine and threonine residues. Mediates O-fucosylation of the DELLA protein RGA, a repressor of the GA signaling pathway. O-fucosylation enhances RGA activity by promoting RGA binding to key transcription factors in brassinosteroid and light-signaling pathways. Regulates root hair patterning upstream of the transcription factor WER, independently of DELLA proteins and GA signaling. Involved in abscisic acid (ABA) signaling partly through functional ABAR. Mediates O-fucosylation of CPN20 that may depress ABA responses during seed germination and seedling development. Involved in the modulation of the pace of the circadian clock by mediating O-fucosylation of APRR5, one of the core circadian clock components. O-fucosylation promotes APRR5 proteolysis. This is Probable UDP-N-acetylglucosamine--peptide N-acetylglucosaminyltransferase SPINDLY from Arabidopsis thaliana (Mouse-ear cress).